A 177-amino-acid chain; its full sequence is Putative fimbrin-like protein FimI (177 aa).

Residues 1–19 form the signal peptide; it reads MIRKGAALVGLVLMSPVIA. The cysteines at positions 40 and 81 are disulfide-linked.

The protein belongs to the fimbrial protein family.

The protein resides in the fimbrium. The chain is Putative fimbrin-like protein FimI (fimI) from Salmonella typhi.